We begin with the raw amino-acid sequence, 323 residues long: COP9 signalosome complex subunit 6 (323 aa).

The region spanning 37–170 is the MPN domain; the sequence is VALHPLVILN…VSVFESVIDI (134 aa).

Belongs to the peptidase M67A family. CSN6 subfamily. Component of the CSN complex, composed of COPS1/GPS1, COPS2, COPS3, COPS4, COPS5, COPS6, COPS7 (COPS7A or COPS7B), COPS8 and COPS9. In the complex, it probably interacts directly with COPS2, COPS4, COPS5, COPS7 (COPS7A or COPS7B) and COPS9. Interacts with the translation initiation factor EIF3S6. Interacts weakly with RBX1. Directly interacts with COP1 and 14-3-3 protein sigma/SFN. Interacts with ERCC6.

The protein localises to the cytoplasm. The protein resides in the nucleus. Component of the COP9 signalosome complex (CSN), a complex involved in various cellular and developmental processes. The CSN complex is an essential regulator of the ubiquitin (Ubl) conjugation pathway by mediating the deneddylation of the cullin subunits of SCF-type E3 ligase complexes, leading to decrease the Ubl ligase activity of SCF-type complexes such as SCF, CSA or DDB2. The complex is also involved in phosphorylation of p53/TP53, c-jun/JUN, IkappaBalpha/NFKBIA, ITPK1 and IRF8, possibly via its association with CK2 and PKD kinases. CSN-dependent phosphorylation of TP53 and JUN promotes and protects degradation by the Ubl system, respectively. Has some glucocorticoid receptor-responsive activity. Stabilizes COP1 through reducing COP1 auto-ubiquitination and decelerating COP1 turnover rate, hence regulates the ubiquitination of COP1 targets, including SFN. The protein is COP9 signalosome complex subunit 6 (COPS6) of Sus scrofa (Pig).